Here is a 921-residue protein sequence, read N- to C-terminus: MDFKDTLLMPKTDFPMRGNLPNREPDIQKKWEEEDIYRLVQERTKDRPKFVLHDGPPYANGDIHMGHALNKILKDFIVRYKSMSGYNAPYVPGWDTHGLPIETALTKNKKVNRKEMSVAEFRKLCEEYAWKQIEGQREQFKRLGVRGDWENPYVTLKPEYEAQQIRVFGEMAKRGYIYKGLKPVNWSPSSESALAEAEIEYQDKRSASIYVAFGVKDGKGVLENGERIIIWTTTPWTIPANLGISVHPDLEYSVIAVGEDRFVVASALVENVASACGFDQYEVTRTVKGKDLENIIAEHPLYGRDSLVMLGEHVTTDAGTGCVHTAPGHGEDDFIIGQKYGLDVLCPVDEKGVMTSEAPGFEGMFYDDANKAITQQLDEKGALVKLEFITHSYPHDWRTKKPTIFRATAQWFASIKDFRSDLLDAIKETKWVPEWGEQRLHNMVRDRGDWCISRQRAWGVPIPVFYAENGEPVITDETIEHVSELFRQHGSNIWFEKEAKDLLPEGFTHPGSPNGTFTKEQDIMDVWFDSGSSHQAVLEERDDLVRPADLYLEGSDQYRGWFNSSLSTAVAVTGKAPYKGVLSHGFALDGEGRKMSKSIGNVVVPAKVMKQLGADILRLWVSSVDYQADVRVSDAILKQVAEVYRKIRNTFRFLHGNLFDFDPKTNAVAVEDLREVDQYMLIKLNKLIDKVKKAYDEYEFAVVYHSIHNFCTIELSSFYLDFAKDIVYIEHADHPDRRSMQTVFYETLLALVKLSAPILPHTADELWSHLTFVEEQSVQLTDMPETITVPNSEATEEKFDRFMALRDDVLKALETARNEKIIGKSLEANLKLYPNKENKELLASIKENLSQLFIVSELTISEENEAPNDAQSFATGKIAVEKAEGEMCERSRVISKDVGANPKYPTLSLRNAEIVEKYYQK.

A 'HIGH' region motif is present at residues 57 to 67 (PYANGDIHMGH). An L-isoleucyl-5'-AMP-binding site is contributed by Glu-553. The short motif at 594–598 (KMSKS) is the 'KMSKS' region element. Lys-597 serves as a coordination point for ATP.

Belongs to the class-I aminoacyl-tRNA synthetase family. IleS type 1 subfamily. In terms of assembly, monomer.

It is found in the cytoplasm. It catalyses the reaction tRNA(Ile) + L-isoleucine + ATP = L-isoleucyl-tRNA(Ile) + AMP + diphosphate. Functionally, catalyzes the attachment of isoleucine to tRNA(Ile). As IleRS can inadvertently accommodate and process structurally similar amino acids such as valine, to avoid such errors it has two additional distinct tRNA(Ile)-dependent editing activities. One activity is designated as 'pretransfer' editing and involves the hydrolysis of activated Val-AMP. The other activity is designated 'posttransfer' editing and involves deacylation of mischarged Val-tRNA(Ile). The polypeptide is Isoleucine--tRNA ligase (Bacillus subtilis (strain 168)).